We begin with the raw amino-acid sequence, 536 residues long: Fanconi anemia group E protein (536 aa).

The segment at 150 to 371 (MEGASPLSER…VLTRSLFLGR (222 aa)) is interaction with FANCC. Residues 171 to 252 (LGLGGRRLKS…ADGGSASPIK (82 aa)) are disordered. The span at 230–239 (EKERPEHKSL) shows a compositional bias: basic and acidic residues. Ser249 is modified (phosphoserine). Phosphothreonine; by CHEK1 is present on Thr346. Phosphoserine; by CHEK1 is present on Ser374.

In terms of assembly, belongs to the multisubunit FA complex composed of FANCA, FANCB, FANCC, FANCE, FANCF, FANCG, FANCL/PHF9 and FANCM. The complex is not found in FA patients. Interacts with FANCC and FANCD2. Phosphorylated. Phosphorylation by CHEK1 at Thr-346 and Ser-374 regulates its function in DNA cross-links repair. Post-translationally, ubiquitinated. Phosphorylation by CHEK1 induces polyubiquitination and degradation.

The protein resides in the nucleus. As part of the Fanconi anemia (FA) complex functions in DNA cross-links repair. Required for the nuclear accumulation of FANCC and provides a critical bridge between the FA complex and FANCD2. The polypeptide is Fanconi anemia group E protein (FANCE) (Homo sapiens (Human)).